A 75-amino-acid chain; its full sequence is CLAVATA3/ESR (CLE)-related protein 33 (75 aa).

The N-terminal stretch at 1 to 22 (MASWRMLCFVLLFTSILICHDA) is a signal peptide. Hydroxyproline is present on residues proline 67 and proline 70. The O-linked (Ara...) hydroxyproline glycan is linked to proline 70.

The protein belongs to the CLV3/ESR signal peptide family. In terms of processing, the O-glycosylation (arabinosylation) of the hydroxyproline Pro-70 enhances binding affinity of the CLE33p peptide for its receptor. In terms of tissue distribution, expressed in root vasculature.

It is found in the secreted. The protein resides in the extracellular space. In terms of biological role, signaling peptide involved in the regulation of root colonization by arbuscular mycorrhizal (AM) fungi. Moves from root to shoot to function with the receptor kinase SUNN, in a signaling pathway that repress strigolactone biosynthetic genes and strigolactone content in the roots, and consequently reduces the promotion of further colonization by AM fungi. The chain is CLAVATA3/ESR (CLE)-related protein 33 from Medicago truncatula (Barrel medic).